A 370-amino-acid chain; its full sequence is Anthranilate phosphoribosyltransferase (370 aa).

Residues Gly82, 85 to 86 (GD), Thr90, 92 to 95 (NVST), 110 to 118 (KHGNRAATS), and Ser122 each bind 5-phospho-alpha-D-ribose 1-diphosphate. Gly82 is a binding site for anthranilate. Ser94 serves as a coordination point for Mg(2+). Anthranilate is bound at residue Asn113. Position 168 (Arg168) interacts with anthranilate. Mg(2+) contacts are provided by Asp226 and Glu227.

It belongs to the anthranilate phosphoribosyltransferase family. Homodimer. Mg(2+) serves as cofactor.

The enzyme catalyses N-(5-phospho-beta-D-ribosyl)anthranilate + diphosphate = 5-phospho-alpha-D-ribose 1-diphosphate + anthranilate. It functions in the pathway amino-acid biosynthesis; L-tryptophan biosynthesis; L-tryptophan from chorismate: step 2/5. In terms of biological role, catalyzes the transfer of the phosphoribosyl group of 5-phosphorylribose-1-pyrophosphate (PRPP) to anthranilate to yield N-(5'-phosphoribosyl)-anthranilate (PRA). This is Anthranilate phosphoribosyltransferase from Methanosarcina mazei (strain ATCC BAA-159 / DSM 3647 / Goe1 / Go1 / JCM 11833 / OCM 88) (Methanosarcina frisia).